Reading from the N-terminus, the 681-residue chain is Chaperone protein HtpG (681 aa).

The segment at 1-326 (MQKGNIGVTT…SPDIPLNVSR (326 aa)) is a; substrate-binding. The b stretch occupies residues 327–545 (SYLQSDSNVK…YMRRMKEMAN (219 aa)). The c stretch occupies residues 546–681 (IQAGMSFYGE…NFVKRSIELI (136 aa)). The tract at residues 589-620 (IQTEMNSVSKRRNELKDSQKDKKEEDIPTAEK) is disordered. Residues 599–620 (RRNELKDSQKDKKEEDIPTAEK) are compositionally biased toward basic and acidic residues.

It belongs to the heat shock protein 90 family. Homodimer.

Its subcellular location is the cytoplasm. Its function is as follows. Molecular chaperone. Has ATPase activity. The chain is Chaperone protein HtpG from Bacteroides thetaiotaomicron (strain ATCC 29148 / DSM 2079 / JCM 5827 / CCUG 10774 / NCTC 10582 / VPI-5482 / E50).